We begin with the raw amino-acid sequence, 399 residues long: [Pyruvate dehydrogenase (acetyl-transferring)] kinase, mitochondrial (399 aa).

A mitochondrion-targeting transit peptide spans 1–18 (MFLTRRLLGPFTSAIARK). The region spanning 123–360 (VVETMAEGLI…DAMIFLKAIP (238 aa)) is the Histidine kinase domain. Residues 247–254 (ELFKNSMR), Asp286, 305–306 (ST), and 321–326 (GYGYGL) each bind ATP.

The protein belongs to the PDK/BCKDK protein kinase family.

It is found in the mitochondrion matrix. It carries out the reaction L-seryl-[pyruvate dehydrogenase E1 alpha subunit] + ATP = O-phospho-L-seryl-[pyruvate dehydrogenase E1 alpha subunit] + ADP + H(+). Its function is as follows. Inhibits the mitochondrial pyruvate dehydrogenase complex by phosphorylation of the E1 alpha subunit, thus contributing to the regulation of glucose metabolism. The polypeptide is [Pyruvate dehydrogenase (acetyl-transferring)] kinase, mitochondrial (Ascaris suum (Pig roundworm)).